Here is a 215-residue protein sequence, read N- to C-terminus: Cytochrome b6 (215 aa).

A helical membrane pass occupies residues 32–52 (IFYCLGGITLTCFLVQVATGF). Cys35 is a heme c binding site. Heme b-binding residues include His86 and His100. Helical transmembrane passes span 90–110 (ASMMVLMMILHVFRVYLTGGF), 116–136 (LTWVTGVVLAVLTASFGVTGY), and 186–206 (LHTFVLPLITAVFMLMHFLMI). Heme b-binding residues include His187 and His202.

Belongs to the cytochrome b family. PetB subfamily. In terms of assembly, the 4 large subunits of the cytochrome b6-f complex are cytochrome b6, subunit IV (17 kDa polypeptide, PetD), cytochrome f and the Rieske protein, while the 4 small subunits are PetG, PetL, PetM and PetN. The complex functions as a dimer. Heme b serves as cofactor. Heme c is required as a cofactor.

The protein resides in the plastid thylakoid membrane. Component of the cytochrome b6-f complex, which mediates electron transfer between photosystem II (PSII) and photosystem I (PSI), cyclic electron flow around PSI, and state transitions. This Cuscuta reflexa (Southern Asian dodder) protein is Cytochrome b6 (petB).